Here is a 260-residue protein sequence, read N- to C-terminus: Sugar fermentation stimulation protein homolog (260 aa).

It belongs to the SfsA family.

In Chloroflexus aggregans (strain MD-66 / DSM 9485), this protein is Sugar fermentation stimulation protein homolog.